The sequence spans 246 residues: Phosducin (246 aa).

A compositionally biased stretch (acidic residues) spans 1 to 14 (MEEAASQSLEEDFE). The disordered stretch occupies residues 1–70 (MEEAASQSLE…DKDSKERMSR (70 aa)). The Phosducin domain occupies 1–246 (MEEAASQSLE…QTNTEDEDIE (246 aa)). The span at 58-69 (SRDDKDSKERMS) shows a compositional bias: basic and acidic residues. S73 is subject to Phosphoserine; by PKA. Positions 111-246 (YGFVYELETG…QTNTEDEDIE (136 aa)) are thioredoxin fold.

It belongs to the phosducin family. In terms of assembly, interacts with CRX. Forms a complex with the beta and gamma subunits of the GTP-binding protein, transducin. In terms of processing, light-induced changes in cyclic nucleotide levels modulate the phosphorylation of this protein by cAMP kinase.

The protein resides in the cytoplasm. It localises to the cytosol. It is found in the nucleus. Its subcellular location is the cell projection. The protein localises to the cilium. The protein resides in the photoreceptor outer segment. It localises to the photoreceptor inner segment. Functionally, inhibits the transcriptional activation activity of the cone-rod homeobox CRX. May participate in the regulation of visual phototransduction or in the integration of photoreceptor metabolism. The chain is Phosducin (Pdc) from Rattus norvegicus (Rat).